The following is a 306-amino-acid chain: Pantothenate kinase (306 aa).

Residue 90-97 (GSVAVGKS) coordinates ATP.

Belongs to the prokaryotic pantothenate kinase family.

The protein resides in the cytoplasm. It catalyses the reaction (R)-pantothenate + ATP = (R)-4'-phosphopantothenate + ADP + H(+). It functions in the pathway cofactor biosynthesis; coenzyme A biosynthesis; CoA from (R)-pantothenate: step 1/5. This Listeria innocua serovar 6a (strain ATCC BAA-680 / CLIP 11262) protein is Pantothenate kinase (coaA).